The chain runs to 876 residues: E3 ubiquitin-protein ligase TRIM71 (876 aa).

The segment at 12–90 adopts an RING-type zinc-finger fold; sequence CPLCKEMCGS…ALKLRCPICD (79 aa). The segment covering 26–40 has biased composition (low complexity); that stretch reads SSNSSTSSSSSQTSG. Disordered stretches follow at residues 26-46 and 128-192; these read SSNSSTSSSSSQTSGSSGGGG and KNGR…AALL. The span at 137–148 shows a compositional bias: gly residues; sequence PAAGSGAGGGGA. A compositionally biased stretch (low complexity) spans 160–182; the sequence is RAAAAASSPAAGSAAPSASSSSS. The B box-type 1; atypical zinc-finger motif lies at 200-247; it reads QGEPRCSSCDEGNAASSRCLDCQEHLCDNCVRAHQRVRLTKDHFIERF. 8 residues coordinate Zn(2+): C205, C208, C229, H233, C286, H289, C309, and H314. The B box-type 2 zinc finger occupies 281 to 322; the sequence is ERASYCQHHDDEVLHFYCDTCSVPICRECTMGRHVGHSFIYL. 2 coiled-coil regions span residues 344-373 and 399-434; these read RQAIQLSIEQAQAVAEQVEMKAKVVQSEVK and QVKAKSLYLQVEKLRQNLNKLDNTISAVQQVLEEGR. The stretch at 487–588 is one Filamin repeat; sequence SSGAFAPLTK…IENSPFKVVV (102 aa). 6 NHL repeats span residues 601–644, 648–691, 695–738, 742–785, 789–832, and 836–876; these read GLSF…FKPC, HHKF…FTFE, ILKF…FGPD, LNKY…IHAD, ARFL…FESN, and LCKF…ILVF.

It belongs to the TRIM/RBCC family.

It localises to the cytoplasm. It is found in the P-body. The enzyme catalyses S-ubiquitinyl-[E2 ubiquitin-conjugating enzyme]-L-cysteine + [acceptor protein]-L-lysine = [E2 ubiquitin-conjugating enzyme]-L-cysteine + N(6)-ubiquitinyl-[acceptor protein]-L-lysine.. Its pathway is protein modification; protein ubiquitination. Its function is as follows. E3 ubiquitin-protein ligase that cooperates with the microRNAs (miRNAs) machinery and promotes embryonic stem cells proliferation and maintenance. Binds to miRNAs and participates in post-transcriptional repression of transcripts. Required to maintain proliferation and prevent premature differentiation of neural progenitor cells during early neural development. The protein is E3 ubiquitin-protein ligase TRIM71 (TRIM71) of Gallus gallus (Chicken).